The sequence spans 220 residues: uncharacterized protein (220 aa).

This is an uncharacterized protein from Acidianus two-tailed virus (ATV).